Consider the following 142-residue polypeptide: Large ribosomal subunit protein uL16 (142 aa).

It belongs to the universal ribosomal protein uL16 family. Part of the 50S ribosomal subunit.

Its function is as follows. Binds 23S rRNA and is also seen to make contacts with the A and possibly P site tRNAs. The polypeptide is Large ribosomal subunit protein uL16 (Aquifex aeolicus (strain VF5)).